We begin with the raw amino-acid sequence, 256 residues long: H-2 class II histocompatibility antigen, A-K alpha chain (256 aa).

The N-terminal stretch at 1 to 23 (MPRSRALILGVLALTTMLSLCGG) is a signal peptide. The alpha-1 stretch occupies residues 24–111 (EDDIEADHVG…KRSNSTPATN (88 aa)). Residues 24 to 218 (EDDIEADHVG…IPAPMSELTE (195 aa)) lie on the Extracellular side of the membrane. N-linked (GlcNAc...) asparagine glycans are attached at residues N105 and N145. The tract at residues 112–205 (EAPQATVFPK…GLEEPVLKHW (94 aa)) is alpha-2. Positions 114 to 206 (PQATVFPKSP…LEEPVLKHWE (93 aa)) constitute an Ig-like C1-type domain. C134 and C190 are oxidised to a cystine. A connecting peptide region spans residues 206-218 (EPEIPAPMSELTE). The helical transmembrane segment at 219–241 (TVVCALGLSVGLVGIVVGTIFII) threads the bilayer. The Cytoplasmic segment spans residues 242-256 (QGLRSGGTSRHPGPL).

It belongs to the MHC class II family.

The protein localises to the membrane. This is H-2 class II histocompatibility antigen, A-K alpha chain (H2-Aa) from Mus musculus (Mouse).